A 168-amino-acid polypeptide reads, in one-letter code: Pathogenesis-related protein 1B (168 aa).

A signal peptide spans 1–30 (MGFFLFSQMPSFFLVSTLLLFLIISHSSHA). The 119-residue stretch at 38–156 (LDAHNTARAD…NGGYVVSCNY (119 aa)) folds into the SCP domain.

It belongs to the CRISP family. Post-translationally, three disulfide bonds are present.

Its subcellular location is the vacuole. Probably involved in the defense reaction of plants against pathogens. This is Pathogenesis-related protein 1B from Nicotiana tabacum (Common tobacco).